The sequence spans 508 residues: Photosystem II CP47 reaction center protein (508 aa).

The next 6 helical transmembrane spans lie at 21-36 (AVHI…WAGS), 101-115 (IVFS…IWHW), 140-156 (GIHL…FGAF), 203-218 (IAAG…FHLS), 237-252 (VLSS…AFVV), and 457-472 (TFAL…HGAR).

This sequence belongs to the PsbB/PsbC family. PsbB subfamily. As to quaternary structure, PSII is composed of 1 copy each of membrane proteins PsbA, PsbB, PsbC, PsbD, PsbE, PsbF, PsbH, PsbI, PsbJ, PsbK, PsbL, PsbM, PsbT, PsbX, PsbY, PsbZ, Psb30/Ycf12, at least 3 peripheral proteins of the oxygen-evolving complex and a large number of cofactors. It forms dimeric complexes. Binds multiple chlorophylls. PSII binds additional chlorophylls, carotenoids and specific lipids. is required as a cofactor.

It is found in the plastid. Its subcellular location is the chloroplast thylakoid membrane. Functionally, one of the components of the core complex of photosystem II (PSII). It binds chlorophyll and helps catalyze the primary light-induced photochemical processes of PSII. PSII is a light-driven water:plastoquinone oxidoreductase, using light energy to abstract electrons from H(2)O, generating O(2) and a proton gradient subsequently used for ATP formation. The protein is Photosystem II CP47 reaction center protein of Lolium perenne (Perennial ryegrass).